The chain runs to 383 residues: Probable lipid transporter atnI (383 aa).

2 consecutive transmembrane segments (helical) span residues 46–66 and 71–91; these read VLFS…AIMF and AWVV…RSLF. N94 carries N-linked (GlcNAc...) asparagine glycosylation. Helical transmembrane passes span 104–124, 144–164, 182–202, 231–251, and 269–289; these read FTIF…MTLG, FGHI…VGAA, IYMG…GLFI, WLFY…IFRL, and WFEY…LNVA. The segment at 305-383 is disordered; it reads VSRKEKKQRK…YDNRGNEVRP (79 aa). Residues 307-316 are compositionally biased toward basic residues; the sequence is RKEKKQRKRE. Positions 317–329 are enriched in basic and acidic residues; that stretch reads KKEAKIAEKEAKK.

Belongs to the lipid-translocating exporter (LTE) (TC 9.A.26.1) family.

The protein localises to the membrane. It functions in the pathway secondary metabolite biosynthesis. Functionally, probable lipid transporter; part of the gene cluster that mediates the biosynthesis of aspercryptins, linear lipopeptides built from six amino acids including 2 highly unusual and nonproteogenic amino acids, 2-amino-octanoic acid (2aoa) and 2-amino-dodecanol (2adol). The core structure of aspercryptins is as follows: Ser/Ala-Thr-Ile/Val-2aoa-Asn-2adol. The first step of aspercryptin biosynthesis is the generation of the fatty acid precursors, octanoic and dodecanoic acids, by the FAS subunits atnF and atnM. The fatty acid precursors are likely transformed into the corresponding alpha-amino fatty acids in three steps. First, they are hydroxylated by the cytochrome P450 monooxygenase atnE, then oxidized to the corresponding alpha-keto acids by the NAD(P)-dependent oxidoreductase atnD, and finally converted to the alpha-amino fatty acids by the PLP-dependent aminotransferases atnH or atnJ. the alpha-amino fatty acids, 2-amino-octanoic and 2-amino-dodecanoic acids, are recognized, activated, and covalently tethered to the NRPS atnA by its fourth and sixth adenylation domains. The second module of atnA is the Thr module and contains an epimerase (E) domain responsible for the epimerization of Thr to D-allo-Thr. Additionally, despite atnA having only one epimerase domain, the first amino acid of aspercryptin A1 is D-Ser, suggesting that serine is either loaded directly as D-Ser on the first module or that the epimerase domain in the threonine module epimerizes both L-Ser and L-Thr. After condensation of the hexapeptide of aspercryptin, the C-terminal reductase (TE) domain might be involved in the reductive release and production of the aldehyde hexapeptide. Further reduction would generate aspercryptins. The variety of aspercryptins produced reflects the flexibility of the atnA NRPS, allowing incorporation of alanine instead of serine, valine for isoleucine, and a C10 fatty amino alcohol instead of the C12 version. AtnB seems to be involved in the selectivity for Ile versus Val by the third module. Moreover, type B, C and D aspercryptins have an additional N-terminal cichorine, acetyl and propionyl group respectively. This chain is Probable lipid transporter atnI, found in Emericella nidulans (strain FGSC A4 / ATCC 38163 / CBS 112.46 / NRRL 194 / M139) (Aspergillus nidulans).